The chain runs to 208 residues: Protein Nef (208 aa).

G2 is lipidated: N-myristoyl glycine; by host. A Phosphoserine; by host modification is found at S6. An acidic; interacts with host PACS1 and PACS2; stabilizes the interaction of NEF/MHC-I with host AP1M1; necessary for MHC-I internalization region spans residues 64 to 67 (EEEE). Residues 71 to 80 (PVKPQVPLRP) form an SH3-binding; interaction with Src family tyrosine kinases region. The PxxP; stabilizes the interaction of NEF/MHC-I with host AP1M1; necessary for MHC-I internalization motif lies at 74–77 (PQVP). The mediates dimerization, Nef-PTE1 interaction stretch occupies residues 110 to 126 (DILDLWVYHTQGYFPDW). Residues 150 to 182 (VEPEKIEEANKGENNCLLHPMSQHGMDDPEREV) are binding to ATP6V1H. A Dileucine internalization motif; necessary for CD4 internalization motif is present at residues 166 to 167 (LL). The Diacidic; necessary for CD4 internalization motif lies at 176–177 (DD).

This sequence belongs to the lentivirus primate group Nef protein family. As to quaternary structure, monomer; cytosolic form. Homodimer; membrane bound form. Interacts with Nef associated p21-activated kinase (PAK2); this interaction activates PAK2. Associates with the Nef-MHC-I-AP1 complex; this complex is required for MHC-I internalization. Interacts (via C-terminus) with host PI3-kinase. Interacts with host PACS1; this interaction seems to be weak. Interacts with host PACS2. Interacts with host LCK and MAPK3; these interactions inhibit the kinase activity of the latter. Interacts with host ATP6V1H; this interaction may play a role in CD4 endocytosis. Associates with the CD4-Nef-AP2 complex; this complex is required for CD4 internalization. Interacts with host AP2 subunit alpha and AP2 subunit sigma2. Interacts with TCR-zeta chain; this interaction up-regulates the Fas ligand (FasL) surface expression. Interacts with host HCK, LYN, and SRC; these interactions activate the Src family kinases. Interacts with MAP3K5; this interaction inhibits the Fas and TNFR-mediated death signals. Interacts with beta-COP and PTE1. Interacts with human RACK1; this increases Nef phosphorylation by PKC. Interacts with TP53; this interaction decreases the half-life of TP53, protecting the infected cell against p53-mediated apoptosis. Post-translationally, the virion-associated Nef proteins are cleaved by the viral protease to release the soluble C-terminal core protein. Nef is probably cleaved concomitantly with viral structural proteins on maturation of virus particles. In terms of processing, myristoylated. Phosphorylated on serine residues, probably by host PKCdelta and theta.

The protein resides in the host cell membrane. The protein localises to the virion. It is found in the secreted. It localises to the host Golgi apparatus membrane. Factor of infectivity and pathogenicity, required for optimal virus replication. Alters numerous pathways of T-lymphocyte function and down-regulates immunity surface molecules in order to evade host defense and increase viral infectivity. Alters the functionality of other immunity cells, like dendritic cells, monocytes/macrophages and NK cells. In terms of biological role, in infected CD4(+) T-lymphocytes, down-regulates the surface MHC-I, mature MHC-II, CD4, CD28, CCR5 and CXCR4 molecules. Mediates internalization and degradation of host CD4 through the interaction of with the cytoplasmic tail of CD4, the recruitment of AP-2 (clathrin adapter protein complex 2), internalization through clathrin coated pits, and subsequent transport to endosomes and lysosomes for degradation. Diverts host MHC-I molecules to the trans-Golgi network-associated endosomal compartments by an endocytic pathway to finally target them for degradation. MHC-I down-regulation may involve AP-1 (clathrin adapter protein complex 1) or possibly Src family kinase-ZAP70/Syk-PI3K cascade recruited by PACS2. In consequence infected cells are masked for immune recognition by cytotoxic T-lymphocytes. Decreasing the number of immune receptors also prevents reinfection by more HIV particles (superinfection). Down-regulates host SERINC3 and SERINC5 thereby excluding these proteins from the viral particles. Virion infectivity is drastically higher when SERINC3 or SERINC5 are excluded from the viral envelope, because these host antiviral proteins impair the membrane fusion event necessary for subsequent virion penetration. Its function is as follows. Bypasses host T-cell signaling by inducing a transcriptional program nearly identical to that of anti-CD3 cell activation. Interaction with TCR-zeta chain up-regulates the Fas ligand (FasL). Increasing surface FasL molecules and decreasing surface MHC-I molecules on infected CD4(+) cells send attacking cytotoxic CD8+ T-lymphocytes into apoptosis. Functionally, plays a role in optimizing the host cell environment for viral replication without causing cell death by apoptosis. Protects the infected cells from apoptosis in order to keep them alive until the next virus generation is ready to strike. Inhibits the Fas and TNFR-mediated death signals by blocking MAP3K5/ASK1. Decreases the half-life of TP53, protecting the infected cell against p53-mediated apoptosis. Inhibits the apoptotic signals regulated by the Bcl-2 family proteins through the formation of a Nef/PI3-kinase/PAK2 complex that leads to activation of PAK2 and induces phosphorylation of host BAD. Extracellular Nef protein targets CD4(+) T-lymphocytes for apoptosis by interacting with CXCR4 surface receptors. The chain is Protein Nef from Human immunodeficiency virus type 1 group M subtype B (isolate MN) (HIV-1).